The primary structure comprises 182 residues: tRNA-splicing endonuclease (182 aa).

Catalysis depends on residues Tyr-119, His-127, and Lys-158.

This sequence belongs to the tRNA-intron endonuclease family. Archaeal short subfamily. In terms of assembly, homotetramer; although the tetramer contains four active sites, only two participate in the cleavage. Therefore, it should be considered as a dimer of dimers.

The enzyme catalyses pretRNA = a 3'-half-tRNA molecule with a 5'-OH end + a 5'-half-tRNA molecule with a 2',3'-cyclic phosphate end + an intron with a 2',3'-cyclic phosphate and a 5'-hydroxyl terminus.. Its function is as follows. Endonuclease that removes tRNA introns. Cleaves pre-tRNA at the 5'- and 3'-splice sites to release the intron. The products are an intron and two tRNA half-molecules bearing 2',3' cyclic phosphate and 5'-OH termini. Recognizes a pseudosymmetric substrate in which 2 bulged loops of 3 bases are separated by a stem of 4 bp. The sequence is that of tRNA-splicing endonuclease from Saccharolobus solfataricus (strain ATCC 35092 / DSM 1617 / JCM 11322 / P2) (Sulfolobus solfataricus).